Here is a 329-residue protein sequence, read N- to C-terminus: DNA-directed RNA polymerase subunit alpha (329 aa).

The segment at 1-234 (MQGSVTEFLK…EQLDAFVELR (234 aa)) is alpha N-terminal domain (alpha-NTD). Residues 248 to 329 (FDPILLRPVD…WPPASLADDL (82 aa)) form an alpha C-terminal domain (alpha-CTD) region.

The protein belongs to the RNA polymerase alpha chain family. Homodimer. The RNAP catalytic core consists of 2 alpha, 1 beta, 1 beta' and 1 omega subunit. When a sigma factor is associated with the core the holoenzyme is formed, which can initiate transcription.

It carries out the reaction RNA(n) + a ribonucleoside 5'-triphosphate = RNA(n+1) + diphosphate. In terms of biological role, DNA-dependent RNA polymerase catalyzes the transcription of DNA into RNA using the four ribonucleoside triphosphates as substrates. This chain is DNA-directed RNA polymerase subunit alpha, found in Shewanella amazonensis (strain ATCC BAA-1098 / SB2B).